A 480-amino-acid chain; its full sequence is Gasdermin-C4 (480 aa).

A triggers pyroptosis region spans residues 1-226 (MGYSFDRASK…TCVILPSATK (226 aa)).

The protein belongs to the gasdermin family. In terms of assembly, homooligomer; homooligomeric ring-shaped pore complex containing 27-28 subunits when inserted in the membrane. In terms of processing, cleavage by CASP8 relieves autoinhibition by releasing the N-terminal moiety (Gasdermin-C4, N-terminal) that initiates pyroptosis. Palmitoylated.

The protein resides in the cytoplasm. Its subcellular location is the cytosol. It localises to the cell membrane. The full-length protein before cleavage is inactive: intramolecular interactions between N- and C-terminal domains mediate autoinhibition in the absence of activation signal. The intrinsic pyroptosis-inducing activity is carried by the released N-terminal moiety (Gasdermin-C4, N-terminal) following cleavage by caspase CASP8. Its function is as follows. This form constitutes the precursor of the pore-forming protein: upon cleavage, the released N-terminal moiety (Gasdermin-C4, N-terminal) binds to membranes and forms pores, triggering pyroptosis. In terms of biological role, pore-forming protein that causes membrane permeabilization and pyroptosis. Produced by the cleavage of gasdermin-C4 by caspase CASP8 in response to death signals. After cleavage, moves to the plasma membrane where it strongly binds to membrane inner leaflet lipids. Homooligomerizes within the membrane and forms pores of 10-15 nanometers (nm) of inner diameter, triggering pyroptosis. This is Gasdermin-C4 from Mus musculus (Mouse).